The sequence spans 56 residues: Small integral membrane protein 39 (56 aa).

A helical transmembrane segment spans residues 33–53; it reads VVVSAVLALLVLINVVLIFLL.

The protein localises to the membrane. The protein is Small integral membrane protein 39 of Homo sapiens (Human).